An 86-amino-acid chain; its full sequence is Putative membrane protein insertion efficiency factor (86 aa).

The protein belongs to the UPF0161 family.

Its subcellular location is the cell inner membrane. Functionally, could be involved in insertion of integral membrane proteins into the membrane. This Pasteurella multocida (strain Pm70) protein is Putative membrane protein insertion efficiency factor.